A 406-amino-acid polypeptide reads, in one-letter code: Zinc finger protein 57 (406 aa).

In terms of domain architecture, KRAB spans 17–88; that stretch reads VRYEDVAVSF…TCTGVFKGGP (72 aa). The interval 57 to 77 is disordered; it reads ESKKKPQEPNPNLKDKDDDKS. The C2H2-type 1; degenerate zinc finger occupies 90–113; it reads FFCLTCGKCFKKNTFLFNHQFPVR. 2 C2H2-type zinc fingers span residues 140-162 and 168-190; these read FFCNLCGKTYRDASGLSRHRRAH and RSCPECGKCFRDQSEVNRHLKVH. Residues 194–226 form a disordered region; that stretch reads KPVAGSHVKVHQNKPVASNQKQKGRVPPTTRES. Residues 270-292 form a C2H2-type 4 zinc finger; the sequence is VYCPYCRITFTMRTCLLNHLKIH. The segment at 318-337 adopts a C2H2-type 5; degenerate zinc-finger fold; it reads YNCPVCDSSFRGKESLLNHL. Residues 372-406 form a disordered region; sequence SRKRRRKRISSDSSETEGPSGSDEVMEVDTDSDLS. Over residues 395–406 the composition is skewed to acidic residues; it reads EVMEVDTDSDLS.

The protein belongs to the krueppel C2H2-type zinc-finger protein family. As to expression, expressed in oligodendrocytes and at lower levels in astrocytes.

The protein resides in the nucleus. In terms of biological role, transcription regulator required to maintain maternal and paternal gene imprinting, a process by which gene expression is restricted in a parent of origin-specific manner by epigenetic modification of genomic DNA and chromatin, including DNA methylation. Acts by controlling DNA methylation during the earliest multicellular stages of development at multiple imprinting control regions (ICRs). Acts together with ZNF445. Required for the establishment of maternal methylation imprints at SNRPN locus. Acts as a transcriptional repressor in Schwann cells. Binds to a 5'-TGCCGC-3' consensus sequence and recognizes the methylated CpG within this element. In Rattus norvegicus (Rat), this protein is Zinc finger protein 57 (Zfp57).